Consider the following 324-residue polypeptide: Beta-ketoacyl-[acyl-carrier-protein] synthase III (324 aa).

Active-site residues include Cys-112 and His-249. Residues 250–254 (QANDR) form an ACP-binding region. Asn-279 is a catalytic residue.

It belongs to the thiolase-like superfamily. FabH family. Homodimer.

The protein resides in the cytoplasm. The enzyme catalyses malonyl-[ACP] + acetyl-CoA + H(+) = 3-oxobutanoyl-[ACP] + CO2 + CoA. It functions in the pathway lipid metabolism; fatty acid biosynthesis. Functionally, catalyzes the condensation reaction of fatty acid synthesis by the addition to an acyl acceptor of two carbons from malonyl-ACP. Catalyzes the first condensation reaction which initiates fatty acid synthesis and may therefore play a role in governing the total rate of fatty acid production. Possesses both acetoacetyl-ACP synthase and acetyl transacylase activities. Its substrate specificity determines the biosynthesis of branched-chain and/or straight-chain of fatty acids. The sequence is that of Beta-ketoacyl-[acyl-carrier-protein] synthase III from Streptococcus pneumoniae serotype 2 (strain D39 / NCTC 7466).